Consider the following 425-residue polypeptide: Riboflavin biosynthesis protein RibBA (425 aa).

The tract at residues 1 to 204 is DHBP synthase; that stretch reads MTRLDSVERA…IADLIEWRRK (204 aa). D-ribulose 5-phosphate is bound by residues 28–29, Asp-33, 141–145, and Glu-165; these read RE and RPGHT. Glu-29 serves as a coordination point for Mg(2+). Mg(2+) is bound at residue His-144. Residues 205 to 425 form a GTP cyclohydrolase II region; sequence HEKHIERVAE…HLPGEFGGAL (221 aa). A GTP-binding site is contributed by 259-263; sequence RVHSE. Positions 264, 275, and 277 each coordinate Zn(2+). Residues Gln-280, 303–305, and Thr-325 contribute to the GTP site; that span reads EGR. Asp-337 (proton acceptor; for GTP cyclohydrolase activity) is an active-site residue. Arg-339 (nucleophile; for GTP cyclohydrolase activity) is an active-site residue. 2 residues coordinate GTP: Thr-360 and Lys-365.

The protein in the N-terminal section; belongs to the DHBP synthase family. This sequence in the C-terminal section; belongs to the GTP cyclohydrolase II family. The cofactor is Mg(2+). Mn(2+) serves as cofactor. It depends on Zn(2+) as a cofactor.

It carries out the reaction D-ribulose 5-phosphate = (2S)-2-hydroxy-3-oxobutyl phosphate + formate + H(+). The enzyme catalyses GTP + 4 H2O = 2,5-diamino-6-hydroxy-4-(5-phosphoribosylamino)-pyrimidine + formate + 2 phosphate + 3 H(+). Its pathway is cofactor biosynthesis; riboflavin biosynthesis; 2-hydroxy-3-oxobutyl phosphate from D-ribulose 5-phosphate: step 1/1. It functions in the pathway cofactor biosynthesis; riboflavin biosynthesis; 5-amino-6-(D-ribitylamino)uracil from GTP: step 1/4. Functionally, catalyzes the conversion of D-ribulose 5-phosphate to formate and 3,4-dihydroxy-2-butanone 4-phosphate. Its function is as follows. Catalyzes the conversion of GTP to 2,5-diamino-6-ribosylamino-4(3H)-pyrimidinone 5'-phosphate (DARP), formate and pyrophosphate. The protein is Riboflavin biosynthesis protein RibBA of Mycobacterium ulcerans (strain Agy99).